Reading from the N-terminus, the 432-residue chain is Adenylosuccinate synthetase (432 aa).

Residues 12–18 (GDEGKGK) and 40–42 (GHT) contribute to the GTP site. Asp13 functions as the Proton acceptor in the catalytic mechanism. The Mg(2+) site is built by Asp13 and Gly40. IMP-binding positions include 13 to 16 (DEGK), 38 to 41 (NAGH), Thr132, Arg146, Gln226, Thr241, and Arg305. His41 functions as the Proton donor in the catalytic mechanism. 301 to 307 (VVTGRKR) is a binding site for substrate. Residues Arg307, 333-335 (KLD), and 415-417 (STS) each bind GTP.

The protein belongs to the adenylosuccinate synthetase family. In terms of assembly, homodimer. Mg(2+) is required as a cofactor.

Its subcellular location is the cytoplasm. It carries out the reaction IMP + L-aspartate + GTP = N(6)-(1,2-dicarboxyethyl)-AMP + GDP + phosphate + 2 H(+). The protein operates within purine metabolism; AMP biosynthesis via de novo pathway; AMP from IMP: step 1/2. Functionally, plays an important role in the de novo pathway of purine nucleotide biosynthesis. Catalyzes the first committed step in the biosynthesis of AMP from IMP. The polypeptide is Adenylosuccinate synthetase (Mesorhizobium japonicum (strain LMG 29417 / CECT 9101 / MAFF 303099) (Mesorhizobium loti (strain MAFF 303099))).